A 151-amino-acid chain; its full sequence is Guanylate kinase homolog (151 aa).

One can recognise a Guanylate kinase-like domain in the interval 1 to 141 (MEREGVDYHY…AYSKLIQILQ (141 aa)).

It belongs to the guanylate kinase family.

This chain is Guanylate kinase homolog, found in Vaccinia virus (strain Copenhagen) (VACV).